A 173-amino-acid polypeptide reads, in one-letter code: Gamma-crystallin S-1 (173 aa).

Beta/gamma crystallin 'Greek key' domains are found at residues 2 to 40 (GKII…RVES) and 41 to 83 (DWWV…RMLP). The connecting peptide stretch occupies residues 84–88 (HTGRS). 2 Beta/gamma crystallin 'Greek key' domains span residues 89–129 (YRMR…QVMD) and 130–172 (GYWI…RRIM).

The protein belongs to the beta/gamma-crystallin family.

Crystallins are the dominant structural components of the vertebrate eye lens. The chain is Gamma-crystallin S-1 (GS-1) from Chiloscyllium indicum (Slender bamboo shark).